The following is a 241-amino-acid chain: ATP-dependent dethiobiotin synthetase BioD (241 aa).

D13–V18 is a binding site for ATP. T17 provides a ligand contact to Mg(2+). The active site involves K38. S42 lines the substrate pocket. ATP is bound by residues D55, E116 to G119, and N180 to K181. Positions 55 and 116 each coordinate Mg(2+).

Belongs to the dethiobiotin synthetase family. Homodimer. It depends on Mg(2+) as a cofactor.

The protein localises to the cytoplasm. The enzyme catalyses (7R,8S)-7,8-diammoniononanoate + CO2 + ATP = (4R,5S)-dethiobiotin + ADP + phosphate + 3 H(+). It participates in cofactor biosynthesis; biotin biosynthesis; biotin from 7,8-diaminononanoate: step 1/2. In terms of biological role, catalyzes a mechanistically unusual reaction, the ATP-dependent insertion of CO2 between the N7 and N8 nitrogen atoms of 7,8-diaminopelargonic acid (DAPA, also called 7,8-diammoniononanoate) to form a ureido ring. The protein is ATP-dependent dethiobiotin synthetase BioD of Clostridium kluyveri (strain NBRC 12016).